The chain runs to 276 residues: Acyl-[acyl-carrier-protein]--UDP-N-acetylglucosamine O-acyltransferase (276 aa).

Belongs to the transferase hexapeptide repeat family. LpxA subfamily. As to quaternary structure, homotrimer.

The protein resides in the cytoplasm. The catalysed reaction is a (3R)-hydroxyacyl-[ACP] + UDP-N-acetyl-alpha-D-glucosamine = a UDP-3-O-[(3R)-3-hydroxyacyl]-N-acetyl-alpha-D-glucosamine + holo-[ACP]. It functions in the pathway glycolipid biosynthesis; lipid IV(A) biosynthesis; lipid IV(A) from (3R)-3-hydroxytetradecanoyl-[acyl-carrier-protein] and UDP-N-acetyl-alpha-D-glucosamine: step 1/6. Its function is as follows. Involved in the biosynthesis of lipid A, a phosphorylated glycolipid that anchors the lipopolysaccharide to the outer membrane of the cell. The chain is Acyl-[acyl-carrier-protein]--UDP-N-acetylglucosamine O-acyltransferase from Gloeothece citriformis (strain PCC 7424) (Cyanothece sp. (strain PCC 7424)).